A 216-amino-acid polypeptide reads, in one-letter code: Probable GTP-binding protein EngB (216 aa).

One can recognise an EngB-type G domain in the interval 43–216; sequence DRLEVCFAGR…TLRSIITDLT (174 aa). Residues 51-58, 78-82, 96-99, 163-166, and 197-199 contribute to the GTP site; these read GRSNVGKS, GRTQE, DLPG, TKAD, and TSS. Mg(2+) contacts are provided by Ser-58 and Thr-80.

This sequence belongs to the TRAFAC class TrmE-Era-EngA-EngB-Septin-like GTPase superfamily. EngB GTPase family. Requires Mg(2+) as cofactor.

In terms of biological role, necessary for normal cell division and for the maintenance of normal septation. This is Probable GTP-binding protein EngB from Roseobacter denitrificans (strain ATCC 33942 / OCh 114) (Erythrobacter sp. (strain OCh 114)).